The following is a 523-amino-acid chain: Transcription initiation factor TFIID subunit 4 (523 aa).

Disordered regions lie at residues 1–100 (MSLP…AASD) and 185–241 (ASVE…VQGG). The span at 58 to 77 (QMQPPRQPIQQQMQHFQSPS) shows a compositional bias: low complexity. Residues 78–87 (PMAPQGPPGT) are compositionally biased toward pro residues. Positions 101-199 (DKNVTKCVRF…VNPPPGYVFN (99 aa)) constitute a TAFH domain. Residues 204-213 (PGPPQPPPPQ) show a composition bias toward pro residues. Low complexity predominate over residues 214–236 (QQSQQQPPLEMRQIPNPNQIPPQ). The histone-fold stretch occupies residues 329–383 (LKPDEVLNRITKRMMSSCSVEEEALVAISDAVESHLRELITLMAGVAEHRVESLR). Residues 333 to 382 (EVLNRITKRMMSSCSVEEEALVAISDAVESHLRELITLMAGVAEHRVESL) form a necessary and sufficient for interaction with oma-1 region. The tract at residues 407–435 (QEEELRESREKESLIRMSKNKNSGKETIE) is disordered.

This sequence belongs to the TAF4 family. In terms of assembly, component of the TFIID basal transcription factor complex, composed of TATA-box-binding protein tbp-1, and a number of TBP-associated factors (TAFs). Interacts (via histone-fold domain) with oma-1 (via histone-fold domain). May also interact with oma-2. Interacts (via histone-fold domain) with taf-12 (via the histone-fold domain).

The protein resides in the nucleus. It is found in the cytoplasm. Functionally, the TFIID basal transcription factor complex plays a major role in the initiation of RNA polymerase II (Pol II)-dependent transcription. TFIID recognizes and binds promoters via its subunit tbp-1, a TATA-box-binding protein, and promotes assembly of the pre-initiation complex (PIC). The TFIID complex consists of tbp-1 and TBP-associated factors (TAFs), including taf-4. Essential for early embryonic development, probably acting via activating transcription initiation by RNA polymerase II, as part of the TFIID complex. In early embryos, but not oocytes, remains, presumably inactive, in the cytoplasm as a result of binding to oma-1. Upon degradation of oma-1, taf-4 is released and bound by taf-12, and the taf-4/12 heterodimer translocates to the nucleus and transcriptional repression is relieved. Involved in lifespan extension in a manner dependent upon mitochondrial function. Plays a role in modulating polyribosome formation. This is Transcription initiation factor TFIID subunit 4 from Caenorhabditis elegans.